We begin with the raw amino-acid sequence, 203 residues long: Phosphatidylglycerophosphatase B (203 aa).

Position 1 (Met1) is a topological domain, cytoplasmic. Residues Tyr2 to Ala17 traverse the membrane as a helical segment. Topologically, residues Ile18–Ser55 are extracellular. Residues Ser56 to Lys74 form a helical membrane-spanning segment. The Cytoplasmic portion of the chain corresponds to Thr75 to Gly78. A helical membrane pass occupies residues Leu79–Ile99. Residues Lys96–Pro104 are phosphatase sequence motif I. The Extracellular portion of the chain corresponds to Glu100–Ser119. A phosphatase sequence motif II region spans residues Pro118–His121. The helical transmembrane segment at Gly120 to His139 threads the bilayer. Residue His121 is the Proton donors of the active site. At Leu140 to His146 the chain is on the cytoplasmic side. The helical transmembrane segment at Lys147–Tyr167 threads the bilayer. The tract at residues Ser164 to Asp175 is phosphatase sequence motif III. Over Leu168–Phe172 the chain is Extracellular. The active-site Nucleophile is His171. A helical transmembrane segment spans residues Val173–Lys196. Topologically, residues Ile197–Lys203 are cytoplasmic.

It belongs to the PA-phosphatase related phosphoesterase family.

It is found in the cell membrane. The enzyme catalyses a 1,2-diacyl-sn-glycero-3-phospho-(1'-sn-glycero-3'-phosphate) + H2O = a 1,2-diacyl-sn-glycero-3-phospho-(1'-sn-glycerol) + phosphate. Functionally, catalyzes the dephosphorylation of phosphatidylglycerophosphate (PGP) to phosphatidylglycerol. Also has undecaprenyl pyrophosphate phosphatase activity, required for the biosynthesis of the lipid carrier undecaprenyl phosphate. The chain is Phosphatidylglycerophosphatase B from Bacillus subtilis (strain 168).